Reading from the N-terminus, the 399-residue chain is Formate-dependent phosphoribosylglycinamide formyltransferase (399 aa).

N(1)-(5-phospho-beta-D-ribosyl)glycinamide-binding positions include 8–9 (EL) and E68. Residues R100, K141, 146–151 (SSGHGQ), 185–188 (EALA), and E193 contribute to the ATP site. Residues 105 to 308 (VLAHEELGLP…EFALHARAIL (204 aa)) enclose the ATP-grasp domain. Residues E266 and E279 each contribute to the Mg(2+) site. Residues D286, K361, and 368-369 (RR) contribute to the N(1)-(5-phospho-beta-D-ribosyl)glycinamide site.

Belongs to the PurK/PurT family. Homodimer.

The catalysed reaction is N(1)-(5-phospho-beta-D-ribosyl)glycinamide + formate + ATP = N(2)-formyl-N(1)-(5-phospho-beta-D-ribosyl)glycinamide + ADP + phosphate + H(+). It functions in the pathway purine metabolism; IMP biosynthesis via de novo pathway; N(2)-formyl-N(1)-(5-phospho-D-ribosyl)glycinamide from N(1)-(5-phospho-D-ribosyl)glycinamide (formate route): step 1/1. In terms of biological role, involved in the de novo purine biosynthesis. Catalyzes the transfer of formate to 5-phospho-ribosyl-glycinamide (GAR), producing 5-phospho-ribosyl-N-formylglycinamide (FGAR). Formate is provided by PurU via hydrolysis of 10-formyl-tetrahydrofolate. This Bifidobacterium longum (strain NCC 2705) protein is Formate-dependent phosphoribosylglycinamide formyltransferase.